The chain runs to 118 residues: uncharacterized protein (118 aa).

It belongs to the Lactobacillus delbrueckii bacteriophages ORF5 protein family.

This is an uncharacterized protein from Lactobacillus delbrueckii (Lactococcus delbrueckii bacteriophage LL-H).